Here is a 249-residue protein sequence, read N- to C-terminus: Zinc finger protein mnm-2 (249 aa).

Positions 20–65 are disordered; the sequence is PKEELETEEEDEEEDEEEELSSSEVTSENDMETESASSSASSVGQP. The segment covering 24-52 has biased composition (acidic residues); it reads LETEEEDEEEDEEEELSSSEVTSENDMET. C2H2-type zinc fingers lie at residues 168–190, 196–218, and 224–246; these read YRCD…KRIH, FKCE…RLTH, and YVCG…MRTH.

As to expression, in larva and adult, expressed in the M3 pharyngeal motor neurons, extrapharyngeal neurons in the head, the PQR tail neurons, rectal cells, vulva cells, the spermetheca-uterine valve, body wall muscle cells and neurons of the ventral nerve cord. In the embryo, expressed in pharyngeal cells, extrapharyngeal head neurons and within the tail. Expressed in body wall muscle cells during late embryonic stages. Expressed in the mother cells of the M2 and M3 pharyngeal motor neurons precursor cells at the embryonic bean stage and subsequently in the M2 and M3 cells as they are born. Expression is sustained only in the two M3 cells up to at least the 5-day-old adult. In contrast, expression gradually declines in the M2 cells beginning from the time of their birth, and is completely undetectable by the time of hatching.

It is found in the nucleus. Functionally, required in the M3 pharyngeal motor neuron to guide the growth cone of the sister M2 motor neuron during axon development. This is Zinc finger protein mnm-2 from Caenorhabditis elegans.